A 216-amino-acid polypeptide reads, in one-letter code: Transmembrane protein 186 (216 aa).

Topologically, residues 1–68 (MAFLLRVVPR…IYRFRAIRAI (68 aa)) are mitochondrial matrix. Positions 31 to 52 (GDSKRWVGSRSPHSREKSPGTE) are disordered. The helical transmembrane segment at 69 to 91 (GFLSRLKLAQTAVTVVALPPGFY) threads the bilayer. Residues 92–103 (CYSQGLMTLSSL) are Mitochondrial intermembrane-facing. Residues 104–124 (CLLGGVASFALAMLCWMSHFF) traverse the membrane as a helical segment. At 125–216 (RRLVGILYVN…GTLATLKNSK (92 aa)) the chain is on the mitochondrial matrix side.

The protein belongs to the TMEM186 family. In terms of assembly, part of the mitochondrial complex I assembly/MCIA complex that comprises at least the core subunits TMEM126B, NDUFAF1, ECSIT and ACAD9 and complement subunits such as COA1 and TMEM186. Interacts with MT-ND3.

The protein localises to the mitochondrion inner membrane. As part of the MCIA complex, required for efficient assembly of the mitochondrial complex I. The polypeptide is Transmembrane protein 186 (Mus musculus (Mouse)).